Consider the following 317-residue polypeptide: uncharacterized protein (317 aa).

The HTH lysR-type domain maps to methionine 1–threonine 60. A DNA-binding region (H-T-H motif) is located at residues phenylalanine 20 to lysine 40.

This sequence belongs to the LysR transcriptional regulatory family.

This is an uncharacterized protein from Escherichia coli (strain K12).